The following is a 460-amino-acid chain: Argininosuccinate lyase (460 aa).

Belongs to the lyase 1 family. Argininosuccinate lyase subfamily.

It is found in the cytoplasm. The enzyme catalyses 2-(N(omega)-L-arginino)succinate = fumarate + L-arginine. Its pathway is amino-acid biosynthesis; L-arginine biosynthesis; L-arginine from L-ornithine and carbamoyl phosphate: step 3/3. The sequence is that of Argininosuccinate lyase from Streptococcus sanguinis (strain SK36).